Reading from the N-terminus, the 323-residue chain is NADH-ubiquinone oxidoreductase chain 1 (323 aa).

The next 8 helical transmembrane spans lie at V8–L28, F74–M94, L105–G125, I145–F165, S176–A196, I236–F256, E258–V278, and F298–G318.

Belongs to the complex I subunit 1 family.

Its subcellular location is the mitochondrion inner membrane. It carries out the reaction a ubiquinone + NADH + 5 H(+)(in) = a ubiquinol + NAD(+) + 4 H(+)(out). In terms of biological role, core subunit of the mitochondrial membrane respiratory chain NADH dehydrogenase (Complex I) that is believed to belong to the minimal assembly required for catalysis. Complex I functions in the transfer of electrons from NADH to the respiratory chain. The immediate electron acceptor for the enzyme is believed to be ubiquinone. The sequence is that of NADH-ubiquinone oxidoreductase chain 1 (MT-ND1) from Oncorhynchus mykiss (Rainbow trout).